The chain runs to 682 residues: tRNA(Met) cytidine acetyltransferase TmcA (682 aa).

Residues glutamine 176, 198–207, and arginine 320 each bind ATP; that span reads GRGKSTLAGM. One can recognise an N-acetyltransferase domain in the interval 357-534; sequence QQQWIQQPEL…SGCYTAMAIF (178 aa). Residues 462 to 464 and glutamate 502 each bind acetyl-CoA; that span reads VAV.

The protein belongs to the RNA cytidine acetyltransferase family. TmcA subfamily.

It is found in the cytoplasm. The enzyme catalyses cytidine(34) in elongator tRNA(Met) + acetyl-CoA + ATP + H2O = N(4)-acetylcytidine(34) in elongator tRNA(Met) + ADP + phosphate + CoA + H(+). Functionally, catalyzes the formation of N(4)-acetylcytidine (ac(4)C) at the wobble position of tRNA(Met), by using acetyl-CoA as an acetyl donor and ATP (or GTP). The polypeptide is tRNA(Met) cytidine acetyltransferase TmcA (Photorhabdus asymbiotica subsp. asymbiotica (strain ATCC 43949 / 3105-77) (Xenorhabdus luminescens (strain 2))).